Consider the following 84-residue polypeptide: U4-theraphotoxin-Hhn1n (84 aa).

An N-terminal signal peptide occupies residues 1 to 22 (MKVTLIAILTCAAVLVLHTTAA). A propeptide spanning residues 23-47 (EELEESQLMEVGMPDTELAAVDEER) is cleaved from the precursor. 3 disulfides stabilise this stretch: cysteine 51/cysteine 65, cysteine 55/cysteine 76, and cysteine 70/cysteine 81.

The protein belongs to the neurotoxin 12 (Hwtx-2) family. 02 (Hwtx-2) subfamily. In terms of tissue distribution, expressed by the venom gland.

It is found in the secreted. Its function is as follows. Postsynaptic neurotoxin. The chain is U4-theraphotoxin-Hhn1n from Cyriopagopus hainanus (Chinese bird spider).